Here is an 89-residue protein sequence, read N- to C-terminus: Small ribosomal subunit protein bS20 (89 aa).

This sequence belongs to the bacterial ribosomal protein bS20 family.

Functionally, binds directly to 16S ribosomal RNA. This is Small ribosomal subunit protein bS20 from Sulfurovum sp. (strain NBC37-1).